A 264-amino-acid chain; its full sequence is Small ribosomal subunit protein eS1 (264 aa).

The protein belongs to the eukaryotic ribosomal protein eS1 family. Component of the small ribosomal subunit. Mature ribosomes consist of a small (40S) and a large (60S) subunit. The 40S subunit contains about 33 different proteins and 1 molecule of RNA (18S). The 60S subunit contains about 49 different proteins and 3 molecules of RNA (25S, 5.8S and 5S).

The protein localises to the cytoplasm. This Babesia bovis protein is Small ribosomal subunit protein eS1.